We begin with the raw amino-acid sequence, 810 residues long: Phenylalanine--tRNA ligase beta subunit (810 aa).

The tRNA-binding domain maps to 39-151; that stretch reads RTWAAGVVVG…AGLQAGQPVG (113 aa). A B5 domain is found at 408-494; that stretch reads EPEHSITLRL…RLYGYDNFGE (87 aa). Residues D472, D478, E481, and E482 each coordinate Mg(2+). The region spanning 716–809 is the FDX-ACB domain; the sequence is SSFPASDRDL…LVERFRVTLR (94 aa).

This sequence belongs to the phenylalanyl-tRNA synthetase beta subunit family. Type 1 subfamily. Tetramer of two alpha and two beta subunits. It depends on Mg(2+) as a cofactor.

It localises to the cytoplasm. It catalyses the reaction tRNA(Phe) + L-phenylalanine + ATP = L-phenylalanyl-tRNA(Phe) + AMP + diphosphate + H(+). The protein is Phenylalanine--tRNA ligase beta subunit (pheT) of Synechococcus elongatus (strain ATCC 33912 / PCC 7942 / FACHB-805) (Anacystis nidulans R2).